The chain runs to 177 residues: Large ribosomal subunit protein uL6 (177 aa).

It belongs to the universal ribosomal protein uL6 family. Part of the 50S ribosomal subunit.

Its function is as follows. This protein binds to the 23S rRNA, and is important in its secondary structure. It is located near the subunit interface in the base of the L7/L12 stalk, and near the tRNA binding site of the peptidyltransferase center. In Pseudomonas syringae pv. tomato (strain ATCC BAA-871 / DC3000), this protein is Large ribosomal subunit protein uL6.